A 111-amino-acid chain; its full sequence is Cell cycle protein GpsB (111 aa).

Residues 34-72 (LDMIIKDYEVFHKELEQLQQQNARLKRELEEQKLAAAQA) adopt a coiled-coil conformation.

Belongs to the GpsB family. In terms of assembly, forms polymers through the coiled coil domains. Interacts with PBP1, MreC and EzrA.

Its subcellular location is the cytoplasm. Its function is as follows. Divisome component that associates with the complex late in its assembly, after the Z-ring is formed, and is dependent on DivIC and PBP2B for its recruitment to the divisome. Together with EzrA, is a key component of the system that regulates PBP1 localization during cell cycle progression. Its main role could be the removal of PBP1 from the cell pole after pole maturation is completed. Also contributes to the recruitment of PBP1 to the division complex. Not essential for septum formation. The protein is Cell cycle protein GpsB of Bacillus cytotoxicus (strain DSM 22905 / CIP 110041 / 391-98 / NVH 391-98).